The chain runs to 628 residues: 3-hydroxy-3-methylglutaryl-coenzyme A reductase 2 (628 aa).

Helical transmembrane passes span 38–58 (PLYL…YFLL) and 78–98 (EIVA…FFGI). Residues 99–212 (DFVQSLIIRP…HEKTVIVTTE (114 aa)) are linker. The N-linked (GlcNAc...) asparagine glycan is linked to asparagine 153. Residues 213–628 (EDEEIIKSVV…SSKDMSNLSS (416 aa)) are catalytic. The Charge relay system role is filled by glutamate 307. N-linked (GlcNAc...) asparagine glycosylation occurs at asparagine 371. The active-site Charge relay system is lysine 439. The N-linked (GlcNAc...) asparagine glycan is linked to asparagine 484. Catalysis depends on aspartate 515, which acts as the Charge relay system. Histidine 613 acts as the Proton donor in catalysis. Residues asparagine 617 and asparagine 625 are each glycosylated (N-linked (GlcNAc...) asparagine).

This sequence belongs to the HMG-CoA reductase family.

The protein resides in the endoplasmic reticulum membrane. Its subcellular location is the mitochondrion membrane. The protein localises to the plastid membrane. The catalysed reaction is (R)-mevalonate + 2 NADP(+) + CoA = (3S)-3-hydroxy-3-methylglutaryl-CoA + 2 NADPH + 2 H(+). The protein operates within metabolic intermediate biosynthesis; (R)-mevalonate biosynthesis; (R)-mevalonate from acetyl-CoA: step 3/3. In terms of biological role, catalyzes the synthesis of mevalonate. The specific precursor of all isoprenoid compounds present in plants. In Gossypium hirsutum (Upland cotton), this protein is 3-hydroxy-3-methylglutaryl-coenzyme A reductase 2 (HMG2).